The following is a 337-amino-acid chain: Cysteinyl leukotriene receptor 1 (337 aa).

Residues 1-28 (MDETGNLTVSSATCHDTIDDFRNQVYST) are Extracellular-facing. An N-linked (GlcNAc...) asparagine glycan is attached at Asn6. The helical transmembrane segment at 29–49 (LYSMISVVGFFGNGFVLYVLI) threads the bilayer. The Cytoplasmic portion of the chain corresponds to 50-57 (KTYHKKSA). Residues 58-78 (FQVYMINLAVADLLCVCTLPL) traverse the membrane as a helical segment. Residues 79 to 106 (RVVYYVHKGIWLFGDFLCRLSTYALYVN) are Extracellular-facing. Cysteines 96 and 173 form a disulfide. Residues 107 to 127 (LYCSIFFMTAMSFFRCIAIVF) form a helical membrane-spanning segment. The Cytoplasmic portion of the chain corresponds to 128 to 141 (PVQNINLVTQKKAR). A helical transmembrane segment spans residues 142-162 (FVCVGIWIFVILTSSPFLMAK). Residues 163–193 (PQKDEKNNTKCFEPPQDNQTKNHVLVLHYVS) lie on the Extracellular side of the membrane. 2 N-linked (GlcNAc...) asparagine glycosylation sites follow: Asn169 and Asn180. A helical transmembrane segment spans residues 194 to 214 (LFVGFIIPFVIIIVCYTMIIL). Topologically, residues 215-230 (TLLKKSMKKNLSSHKK) are cytoplasmic. A helical transmembrane segment spans residues 231–251 (AIGMIMVVTAAFLVSFMPYHI). Residues 252–276 (QRTIHLHFLHNETKPCDSVLRMQKS) are Extracellular-facing. Asn262 is a glycosylation site (N-linked (GlcNAc...) asparagine). Residues 277-297 (VVITLSLAASNCCFDPLLYFF) form a helical membrane-spanning segment. The Cytoplasmic segment spans residues 298 to 337 (SGGNFRKRLSTFRKHSLSSVTYVPRKKASLPEKGEEICKV).

The protein belongs to the G-protein coupled receptor 1 family. In terms of tissue distribution, widely expressed, with highest levels in spleen and peripheral blood leukocytes. Lower expression in several tissues, such as lung (mostly in smooth muscle bundles and alveolar macrophages), placenta, small intestine, pancreas, colon and heart.

Its subcellular location is the cell membrane. Its function is as follows. Receptor for cysteinyl leukotrienes mediating bronchoconstriction of individuals with and without asthma. Stimulation by LTD4 results in the contraction and proliferation of smooth muscle, edema, eosinophil migration and damage to the mucus layer in the lung. This response is mediated via a G-protein that activates a phosphatidylinositol-calcium second messenger system. The rank order of affinities for the leukotrienes is LTD4 &gt;&gt; LTE4 = LTC4 &gt;&gt; LTB4. This Homo sapiens (Human) protein is Cysteinyl leukotriene receptor 1 (CYSLTR1).